The chain runs to 178 residues: MMKNKYSLNEEEIHLFQQSVAGTKRINQDTVLHSPRRKKTSYIAPERIQQEQIDASYYFSDEFQPNLDSEGPTRYVRGDTNHYELKKLRRGDYSPELFLDLHGLTQMQAKQEIGALIAACRREHVYCACIMHGHGKHILKQQTPLWLAQHPDIIAFHQAPKEWGGNAALLILIELDEP.

A Smr domain is found at Leu99–Glu174.

This sequence belongs to the SmrB family. As to quaternary structure, associates with collided ribosomes, but not with correctly translating polysomes.

Its function is as follows. Acts as a ribosome collision sensor. Detects stalled/collided disomes (pairs of ribosomes where the leading ribosome is stalled and a second ribosome has collided with it) and endonucleolytically cleaves mRNA at the 5' boundary of the stalled ribosome. Stalled/collided disomes form a new interface (primarily via the 30S subunits) that binds SmrB. Cleaved mRNA becomes available for tmRNA ligation, leading to ribosomal subunit dissociation and rescue of stalled ribosomes. The polypeptide is Ribosome rescue factor SmrB (Photorhabdus laumondii subsp. laumondii (strain DSM 15139 / CIP 105565 / TT01) (Photorhabdus luminescens subsp. laumondii)).